Consider the following 75-residue polypeptide: Tautomerase PptA (75 aa).

The active-site Proton acceptor; via imino nitrogen is proline 2.

Belongs to the 4-oxalocrotonate tautomerase family. PptA subfamily. Homodimer.

The protein localises to the cytoplasm. The chain is Tautomerase PptA from Escherichia coli (strain SMS-3-5 / SECEC).